Consider the following 325-residue polypeptide: Neural proliferation differentiation and control protein 1 (325 aa).

Residues 1 to 34 form the signal peptide; that stretch reads MATPLPPPSPRHLRLLRLLLSGLVLGAALRGAAA. Residues 138–175 are disordered; it reads QGLELGLPSTPGTPTPTPHTSLGSPVSSDPVHMSPLEP. Residues 182 to 202 traverse the membrane as a helical segment; that stretch reads GLALVLILAFCVAGAAALSVA. Phosphoserine is present on Ser229. Residues 266 to 290 are disordered; that stretch reads EPPKELDTASSDEENEDGDFTVYEC. The segment covering 275 to 284 has biased composition (acidic residues); the sequence is SSDEENEDGD.

This sequence belongs to the NPDC1/cab-1 family. As to expression, strongly expressed in adult brain; especially in hippocampus, frontal lobe and temporal lobe.

The protein localises to the membrane. Its function is as follows. Suppresses oncogenic transformation in neural and non-neural cells and down-regulates neural cell proliferation. Might be involved in transcriptional regulation. This Homo sapiens (Human) protein is Neural proliferation differentiation and control protein 1 (NPDC1).